A 408-amino-acid chain; its full sequence is Zinc chaperone AztD (408 aa).

A signal peptide spans 1 to 21 (MLRHLAGASALALTLAGAGFA). An N-terminal Zn(2+)-binding motif; binds a third Zn(2+) with low affinity motif is present at residues 23-29 (DHDHDHE). Positions 99, 102, 104, 124, 167, 218, and 408 each coordinate Zn(2+). Cys-214 and Cys-231 are disulfide-bonded.

In terms of assembly, monomer.

The protein localises to the periplasm. In terms of biological role, acts as a zinc chaperone in the AztABCD zinc transport system. Directly transfers one zinc cation to the solute binding protein AztC; the transfer occurs without the formation of a stable interaction. Binds 3 Zn(2+), two with high affinity and one with low affinity, and transfers only Zn(2+) bound to site 2 to AztC. Likely functions to store zinc in the periplasm and may be important for zinc accumulation in zinc-limited environments. The protein is Zinc chaperone AztD of Paracoccus denitrificans (strain Pd 1222).